Consider the following 361-residue polypeptide: 3-dehydroquinate synthase (361 aa).

NAD(+)-binding positions include 72–77 (SGEKEK), 130–131 (TT), K142, and K151. Zn(2+) contacts are provided by E184, H247, and H264.

This sequence belongs to the sugar phosphate cyclases superfamily. Dehydroquinate synthase family. Co(2+) serves as cofactor. Zn(2+) is required as a cofactor. The cofactor is NAD(+).

The protein localises to the cytoplasm. It catalyses the reaction 7-phospho-2-dehydro-3-deoxy-D-arabino-heptonate = 3-dehydroquinate + phosphate. It functions in the pathway metabolic intermediate biosynthesis; chorismate biosynthesis; chorismate from D-erythrose 4-phosphate and phosphoenolpyruvate: step 2/7. Its function is as follows. Catalyzes the conversion of 3-deoxy-D-arabino-heptulosonate 7-phosphate (DAHP) to dehydroquinate (DHQ). The protein is 3-dehydroquinate synthase of Bacillus cereus (strain B4264).